A 225-amino-acid chain; its full sequence is PKHD-type hydroxylase KPK_3192 (225 aa).

Residues 78–177 (TISAPLFNRY…RQASFLWIQS (100 aa)) enclose the Fe2OG dioxygenase domain. Fe cation-binding residues include His96, Asp98, and His158. Residue Arg168 participates in 2-oxoglutarate binding.

Fe(2+) is required as a cofactor. Requires L-ascorbate as cofactor.

This chain is PKHD-type hydroxylase KPK_3192, found in Klebsiella pneumoniae (strain 342).